A 296-amino-acid polypeptide reads, in one-letter code: uncharacterized protein (296 aa).

2 consecutive transmembrane segments (helical) span residues 82 to 102 and 117 to 137; these read VVAPLPVVIHAGAMSILWSVQ and ISVLALVLLGSLGIGVLSAIF.

The protein resides in the cell membrane. This is an uncharacterized protein from Sinorhizobium fredii (strain NBRC 101917 / NGR234).